The primary structure comprises 301 residues: Putative two-component membrane permease complex subunit SMU_747c (301 aa).

Transmembrane regions (helical) follow at residues 15–35 (LAIF…GAIL), 60–80 (ILFG…IVPI), 97–117 (FLAT…SAFG), 124–144 (FLRL…LGFI), 188–208 (YLIF…TRIL), 211–231 (IGHN…ILSL), 238–258 (FIGT…FLLI), and 278–298 (FILQ…LIVG).

The protein belongs to the UPF0718 family. As to quaternary structure, interacts with SMU_746c.

It is found in the cell membrane. Functionally, could be part of a two-component membrane permease system responsible for amino acid transport under low pH. Involved in acidogenesis, biofilm formation and low-pH survival. This is Putative two-component membrane permease complex subunit SMU_747c from Streptococcus mutans serotype c (strain ATCC 700610 / UA159).